Here is an 89-residue protein sequence, read N- to C-terminus: HssA/B-like protein DDB_G0295685 (89 aa).

This sequence belongs to the hssA/B family.

This chain is HssA/B-like protein DDB_G0295685, found in Dictyostelium discoideum (Social amoeba).